Consider the following 440-residue polypeptide: 3-phosphoshikimate 1-carboxyvinyltransferase (440 aa).

3-phosphoshikimate is bound by residues Lys19, Ser20, and Arg24. Lys19 lines the phosphoenolpyruvate pocket. Phosphoenolpyruvate contacts are provided by Gly92 and Arg121. 3-phosphoshikimate contacts are provided by Ser166, Gln168, Asp315, and Lys342. Position 168 (Gln168) interacts with phosphoenolpyruvate. Asp315 acts as the Proton acceptor in catalysis. Arg346 and Arg399 together coordinate phosphoenolpyruvate.

The protein belongs to the EPSP synthase family. In terms of assembly, monomer.

It localises to the cytoplasm. The catalysed reaction is 3-phosphoshikimate + phosphoenolpyruvate = 5-O-(1-carboxyvinyl)-3-phosphoshikimate + phosphate. The protein operates within metabolic intermediate biosynthesis; chorismate biosynthesis; chorismate from D-erythrose 4-phosphate and phosphoenolpyruvate: step 6/7. Catalyzes the transfer of the enolpyruvyl moiety of phosphoenolpyruvate (PEP) to the 5-hydroxyl of shikimate-3-phosphate (S3P) to produce enolpyruvyl shikimate-3-phosphate and inorganic phosphate. This is 3-phosphoshikimate 1-carboxyvinyltransferase from Leptospira borgpetersenii serovar Hardjo-bovis (strain JB197).